We begin with the raw amino-acid sequence, 277 residues long: MIOREX complex component 2 (277 aa).

It belongs to the NAD(P)-dependent epimerase/dehydratase family. As to quaternary structure, associates with the mitochondrial ribosome. Component of a multi-subunit COQ enzyme complex.

The protein resides in the mitochondrion. Its pathway is cofactor biosynthesis; ubiquinone biosynthesis. Functionally, component of MIOREX complexes, large expressome-like assemblies of ribosomes with factors involved in all the steps of post-transcriptional gene expression. Component of a multi-subunit COQ enzyme complex required for coenzyme Q biosynthesis. In Saccharomyces cerevisiae (strain ATCC 204508 / S288c) (Baker's yeast), this protein is MIOREX complex component 2.